The sequence spans 385 residues: SH3 domain-binding protein 5-like (385 aa).

Residues methionine 1–proline 58 are disordered. Residue threonine 13 is modified to Phosphothreonine. Basic and acidic residues predominate over residues leucine 18–proline 28. Phosphoserine is present on residues serine 30 and serine 49. 2 coiled-coil regions span residues arginine 59 to alanine 140 and tryptophan 169 to histidine 272. The tract at residues histidine 272–proline 328 is disordered. Low complexity predominate over residues glutamate 318–proline 328. 4 positions are modified to phosphoserine: serine 343, serine 350, serine 358, and serine 362. Residues aspartate 359–leucine 385 form a disordered region. Residues glycine 376–leucine 385 show a composition bias toward basic residues.

This sequence belongs to the SH3BP5 family.

In terms of biological role, functions as a guanine nucleotide exchange factor (GEF) for RAB11A. This chain is SH3 domain-binding protein 5-like (SH3BP5L), found in Bos taurus (Bovine).